The sequence spans 344 residues: Sorting nexin-16 (344 aa).

Residues 1-10 (MATPYVPVPM) show a composition bias toward pro residues. Residues 1 to 72 (MATPYVPVPM…SASSMCGSPL (72 aa)) are disordered. The span at 14-26 (NSASSFTNNRNQR) shows a compositional bias: polar residues. The segment covering 27-40 (SSSFGSVSTSSTSS) has biased composition (low complexity). A compositionally biased stretch (polar residues) spans 52 to 68 (LKQTNVQDQMDSASSMC). Residues 105 to 218 (DRPSTPTILG…EFLCLDDPPG (114 aa)) enclose the PX domain. A 1,2-diacyl-sn-glycero-3-phospho-(1D-myo-inositol-3-phosphate) contacts are provided by R144, T146, and R184. S222 is modified (phosphoserine). The stretch at 223–278 (LEESRAFCETLEETNYHLQRELLEKQKEVESLKKLLGEKQLHIDALETRIRTLSLE) forms a coiled coil.

The protein belongs to the sorting nexin family. Homooligomer. Interacts with EGFR.

It localises to the early endosome membrane. The protein localises to the late endosome membrane. It is found in the cytoplasm. The protein resides in the lysosome. In terms of biological role, may be involved in several stages of intracellular trafficking. Plays a role in protein transport from early to late endosomes. Plays a role in protein transport to the lysosome. Promotes degradation of EGFR after EGF signaling. This Mus musculus (Mouse) protein is Sorting nexin-16 (Snx16).